Reading from the N-terminus, the 255-residue chain is Hydroxyacylglutathione hydrolase (255 aa).

Zn(2+)-binding residues include His-56, His-58, Asp-60, His-61, His-114, Asp-133, and His-171.

This sequence belongs to the metallo-beta-lactamase superfamily. Glyoxalase II family. Monomer. It depends on Zn(2+) as a cofactor.

The catalysed reaction is an S-(2-hydroxyacyl)glutathione + H2O = a 2-hydroxy carboxylate + glutathione + H(+). It participates in secondary metabolite metabolism; methylglyoxal degradation; (R)-lactate from methylglyoxal: step 2/2. Functionally, thiolesterase that catalyzes the hydrolysis of S-D-lactoyl-glutathione to form glutathione and D-lactic acid. The chain is Hydroxyacylglutathione hydrolase from Fuscovulum blasticum (Rhodobacter blasticus).